A 677-amino-acid chain; its full sequence is MTNKRQILVTSALPYANGAIHLGHMVETIQTDIWVRFQKMQGHDCTYVCADDAHGTAIMLRAEQLGVTAEEQIAKVKADHEADFKDFLIGFDNYHSTHSEENKALSHLIYERVKANGHIAERSITQAFDPEKNLFLADRYIKGTCPKCGAEDQYGDNCENCSATYSPMELKNPRSVISGATPVAKESVHYFFTLPEFTGYLKEWTRAGHLQDEVANKLAEWLDAGLQEWDISRDAPYFGFEIPGAPGKYFYVWLDAPIGYMASFKQLCDRTGKDFDEYWKADSNCELYHFIGKDIVNFHALFWPALLSDAGFRTPTKVCVHGFLTVDGKKMSKSRGTFINARTYLDHLQPEYLRYYYAAKLTGSVDDIDLNLEDFVQRVNSDLVGKVVNIASRTAKFVQKAGGALSANIINEELWQSFVKAGDVIAAHYENRDYSKAMREIMALADLANEFIAEQAPWALAKQEGNEQKVLDVCSLGINCFRAIMTYLKPVLPQTAVAAEEFLGTELTWTGPLSFLGEHTINKFKPLMTRIEGEKIEAMINDSKEATAAMAKTIAEPAADSPLAKEPIADEIEFADFAKVDLRVALIANAEHVEGADKLLRLTLDLGGETRNVFAGIKSAYLPEDLIGKHTIMVANLKPRKMKFGMSEGMVLAAGPGGKELYILEPHEGALPGMRVM.

A 'HIGH' region motif is present at residues 14–24; that stretch reads PYANGAIHLGH. Zn(2+)-binding residues include C145, C148, C158, and C161. Residues 330 to 334 carry the 'KMSKS' region motif; the sequence is KMSKS. Position 333 (K333) interacts with ATP. One can recognise a tRNA-binding domain in the interval 576-677; that stretch reads DFAKVDLRVA…EGALPGMRVM (102 aa).

The protein belongs to the class-I aminoacyl-tRNA synthetase family. MetG type 1 subfamily. In terms of assembly, homodimer. Zn(2+) is required as a cofactor.

Its subcellular location is the cytoplasm. It catalyses the reaction tRNA(Met) + L-methionine + ATP = L-methionyl-tRNA(Met) + AMP + diphosphate. In terms of biological role, is required not only for elongation of protein synthesis but also for the initiation of all mRNA translation through initiator tRNA(fMet) aminoacylation. This is Methionine--tRNA ligase from Saccharophagus degradans (strain 2-40 / ATCC 43961 / DSM 17024).